Consider the following 7311-residue polypeptide: MAM and LDL-receptor class A domain-containing protein 2 (7311 aa).

MAM domains are found at residues 4-171, 199-361, 363-530, 532-695, 727-887, 889-1050, 1052-1220, 1228-1392, 1394-1557, 1559-1722, 1755-1918, 1920-2087, 2089-2254, 2274-2437, 2439-2601, and 2603-2771; these read AYCD…SCVT, LDCD…FCSP, KQCT…VCPP, GDCN…NCPV, YDCT…QCPV, MQCS…ACPL, GDCT…RCRL, FDCN…SCPS, GMCS…SCPA, GDCS…NCIQ, NDCN…KCPS, TDCT…PCPL, GDCD…RCSV, NNCT…PCPP, TVCD…PCPP, and GSCD…YCVG. Residues 2461-2481 form a disordered region; that stretch reads WKRDSGGTPSAGTGPSRDHTT. Positions 2466–2475 are enriched in low complexity; the sequence is GGTPSAGTGP. P-type domains are found at residues 2771-2817 and 2818-2862; these read GLCS…FYHP and SACA…FHGP. 6 disulfide bridges follow: cysteine 2773-cysteine 2802, cysteine 2784-cysteine 2801, cysteine 2795-cysteine 2813, cysteine 2820-cysteine 2847, cysteine 2831-cysteine 2846, and cysteine 2841-cysteine 2858. 4 MAM domains span residues 2883-3048, 3050-3214, 3216-3384, and 3429-3587; these read WDCT…TCPP, RECD…PCPP, GSCD…FCPS, and GACT…NCTL. The LDL-receptor class A 1 domain occupies 3593–3628; it reads SCGQQHRCIRGSCIDRGRVCDYTDDCGDNSDEQNCY. 3 disulfides stabilise this stretch: cysteine 3594–cysteine 3605, cysteine 3600–cysteine 3618, and cysteine 3612–cysteine 3627. The MAM 21 domain maps to 3632–3794; it reads YRCSFEKSLC…DLSMTSSCQS (163 aa). LDL-receptor class A domains follow at residues 3814–3850 and 4016–4054; these read PCPR…VNCG and SCIS…STCA. 3 disulfides stabilise this stretch: cysteine 3815–cysteine 3827, cysteine 3822–cysteine 3840, and cysteine 3834–cysteine 3849. Residues 3850–4011 enclose the MAM 22 domain; the sequence is GSCSFEPGLC…DDVTFQGCAL (162 aa). Intrachain disulfides connect cysteine 4017/cysteine 4029, cysteine 4024/cysteine 4042, and cysteine 4036/cysteine 4053. Positions 4058–4221 constitute an MAM 23 domain; it reads ERCNFEQDLC…DVSFTPNCRP (164 aa). Residues 4239 to 4276 form the LDL-receptor class A 4 domain; it reads GCQPGKFKCANGGNCISVSKVCNFYSDCSGGSDEMNCP. 3 disulfide bridges follow: cysteine 4240-cysteine 4253, cysteine 4247-cysteine 4266, and cysteine 4260-cysteine 4275. The 162-residue stretch at 4277–4438 folds into the MAM 24 domain; that stretch reads ATCNFQNSFC…DDVSFEHCAE (162 aa). An LDL-receptor class A 5 domain is found at 4444-4483; it reads TCSGLSVFRCQSGHCIAMSGKCDFEPDCCDGSEETNIVCA. 3 disulfide bridges follow: cysteine 4445–cysteine 4458, cysteine 4453–cysteine 4471, and cysteine 4465–cysteine 4482. The 161-residue stretch at 4486 to 4646 folds into the MAM 25 domain; it reads NRCNFEAGLC…DISFTPDCVV (161 aa). LDL-receptor class A domains are found at residues 4660–4699 and 4859–4899; these read PTQP…DLCG and YCSG…QSCS. 5 cysteine pairs are disulfide-bonded: cysteine 4668–cysteine 4687, cysteine 4681–cysteine 4698, cysteine 4860–cysteine 4876, cysteine 4871–cysteine 4889, and cysteine 4883–cysteine 4898. The MAM 26 domain maps to 4700-4862; sequence WPCDFQRGTC…NNYTLTYCSG (163 aa). In terms of domain architecture, MAM 27 spans 4903 to 5063; the sequence is SRCTFENGLC…SIAMKPSCQQ (161 aa). In terms of domain architecture, LDL-receptor class A 8 spans 5085–5122; the sequence is NCVLPQVPCVSDGKCVSPSQVCDFNLDCADASDERSCP. Disulfide bonds link cysteine 5086–cysteine 5099, cysteine 5093–cysteine 5112, and cysteine 5106–cysteine 5121. The region spanning 5123–5281 is the MAM 28 domain; sequence HMCTFESDQC…DDIKFVDCAL (159 aa). An LDL-receptor class A 9 domain is found at 5287 to 5322; the sequence is SCPSQFTCARNSCVSNDYVCDFNDDCGDGSDETLCG. Disulfide bonds link cysteine 5288-cysteine 5299, cysteine 5294-cysteine 5312, and cysteine 5306-cysteine 5321. Residues 5326 to 5489 form the MAM 29 domain; the sequence is TRCDFSRGSC…DVSFTTGCKQ (164 aa). The LDL-receptor class A 10 domain maps to 5513–5552; the sequence is QCTTAEFNCFNQGSGACIPSTQVCNFQPNCNDGVDEQNCA. 3 cysteine pairs are disulfide-bonded: cysteine 5514-cysteine 5529, cysteine 5521-cysteine 5542, and cysteine 5536-cysteine 5551. Positions 5554–5719 constitute an MAM 30 domain; the sequence is TKCSFDGGDF…DDIEFLNCVP (166 aa). Residues 5725–5763 enclose the LDL-receptor class A 11 domain; it reads KCTADEFQCARGGCIPKTSVCDFKADCMVGDVSDESSCS. Intrachain disulfides connect cysteine 5726-cysteine 5738, cysteine 5733-cysteine 5751, and cysteine 5745-cysteine 5762. Residues 5768 to 5935 enclose the MAM 31 domain; sequence GQCDFEHGLC…LTPGCQICTD (168 aa). The LDL-receptor class A 12 domain occupies 5957–5993; it reads PCSLQQYVCKNLRCVDKAQICNFKDDCGDNSDELPCG. Intrachain disulfides connect cysteine 5958–cysteine 5970, cysteine 5965–cysteine 5983, and cysteine 5977–cysteine 5992. The 163-residue stretch at 5994–6156 folds into the MAM 32 domain; sequence SNCTFEGDCY…DISFTDNCFV (163 aa). Positions 6014 to 6034 are disordered; that stretch reads NFHWRRRNGKTPSVGTGPTND. The segment covering 6023–6034 has biased composition (polar residues); it reads KTPSVGTGPTND. In terms of domain architecture, LDL-receptor class A 13 spans 6161–6200; it reads TCTPNEVKCRTSGHCVAEQRVCDHVKDCNDGTDEDALICS. 3 disulfides stabilise this stretch: cysteine 6162-cysteine 6175, cysteine 6169-cysteine 6188, and cysteine 6182-cysteine 6199. In terms of domain architecture, MAM 33 spans 6204–6365; sequence ASCDFDVNWC…DISFSAGCYK (162 aa). An LDL-receptor class A 14 domain is found at 6377-6414; it reads RCSKVQFYCKADDLCINIHWKCDGEKDCTDGADEMLCP. Cystine bridges form between cysteine 6378/cysteine 6391, cysteine 6385/cysteine 6404, and cysteine 6398/cysteine 6413. MAM domains lie at 6430–6590, 6606–6779, 6808–6965, and 7173–7311; these read ANCN…NCAK, LDED…NCDF, GDCT…QCQF, and GSCN…YNNL.

In terms of tissue distribution, component of the acid-insoluble and acid-soluble organic matrix of the aragonitic skeleton (at protein level).

Its subcellular location is the secreted. The sequence is that of MAM and LDL-receptor class A domain-containing protein 2 from Acropora millepora (Staghorn coral).